The following is a 1706-amino-acid chain: Cadherin-99C (1706 aa).

A signal peptide spans 1-28 (MAARNSLTPQQGLGFFGLLILLCSAVLG). Over 29–1395 (KSQMCEVETG…AIDNEVFPFT (1367 aa)) the chain is Extracellular. Cadherin domains are found at residues 68–142 (DPDT…APRF), 143–264 (MNTP…DPSF), 277–387 (INPE…PPVI), 388–500 (SSSQ…APKL), 519–604 (VTQV…PPRF), 605–704 (QKPI…NPEF), 707–807 (STLP…VPKF), 808–908 (SDAR…PPRF), 909–1005 (ITVP…RVDV), 1038–1148 (SDDS…APEF), and 1156–1270 (QQDT…ALSF). Residues asparagine 105 and asparagine 188 are each glycosylated (N-linked (GlcNAc...) asparagine). Asparagine 442, asparagine 553, asparagine 620, and asparagine 753 each carry an N-linked (GlcNAc...) asparagine glycan. Asparagine 1053, asparagine 1088, and asparagine 1108 each carry an N-linked (GlcNAc...) asparagine glycan. 2 N-linked (GlcNAc...) asparagine glycosylation sites follow: asparagine 1311 and asparagine 1367. A helical transmembrane segment spans residues 1396-1416 (LIAISLVILILGTIGIIYICI). Residues 1417 to 1706 (SWSKYKNFKQ…RSEVETTTEL (290 aa)) lie on the Cytoplasmic side of the membrane.

Interacts (via the cytoplasmic domain) with ck. Interacts (via the cytoplasmic domain) with Cul1 and Ubr3.

It is found in the apical cell membrane. The protein localises to the endosome membrane. The protein resides in the cell projection. It localises to the microvillus membrane. Functionally, cadherin that functions in epithelial morphogenesis and the intestine epithelial immune response. Essential for female fertility. Regulates the length and organization of apical microvilli in developing follicle cells and salivary glands. Function in the follicle cell is essential for egg development as the microvilli secrete eggshell material such as the vitelline membrane. Acts at least in part by regulating the recruitment of the myosin ck to the follicle cell microvilli. Also required to regulate cell rearrangements during salivary tube elongation, possibly by modulating cellular adhesion between the apical surface and apical extracellular matrix during epithelial tube elongation. May also function in cellular adhesion during the development of other tubular epithelia such as the trachea. Possibly functions as an apical membrane determinant which acts in apical membrane expansion during salivary and tracheal epithelial tube elongation. In salivary gland development, this function is independent of the other apical membrane determinants crb and sas. Essential downstream component of a hh-signaling pathway which regulates the Duox-dependent gut epithelial immune response to bacterial uracil; required for endosome formation in the enterocyte and activating norpA-dependent Ca2+ mobilization, which are essential steps in the Duox-dependent production of reactive oxygen species (ROS) in response to intestinal bacterial infection. This chain is Cadherin-99C, found in Drosophila melanogaster (Fruit fly).